Here is a 448-residue protein sequence, read N- to C-terminus: tRNA wybutosine-synthesizing protein 2 homolog (448 aa).

Residues Ser218, Lys225, Glu265, and Asp293–Asn294 each bind S-adenosyl-L-methionine.

It belongs to the class I-like SAM-binding methyltransferase superfamily. TRM5/TYW2 family.

The enzyme catalyses 4-demethylwyosine(37) in tRNA(Phe) + S-adenosyl-L-methionine = 4-demethyl-7-[(3S)-3-amino-3-carboxypropyl]wyosine(37) in tRNA(Phe) + S-methyl-5'-thioadenosine + H(+). It participates in tRNA modification; wybutosine-tRNA(Phe) biosynthesis. Its function is as follows. S-adenosyl-L-methionine-dependent transferase that acts as a component of the wybutosine biosynthesis pathway. Wybutosine is a hyper modified guanosine with a tricyclic base found at the 3'-position adjacent to the anticodon of eukaryotic phenylalanine tRNA. Catalyzes the transfer of the alpha-amino-alpha-carboxypropyl (acp) group from S-adenosyl-L-methionine to the C-7 position of 4-demethylwyosine (imG-14) to produce wybutosine-86. The protein is tRNA wybutosine-synthesizing protein 2 homolog (TRMT12) of Macaca fascicularis (Crab-eating macaque).